A 674-amino-acid polypeptide reads, in one-letter code: Protein asunder (674 aa).

The stretch at 516–538 (HKAKDQYRLLYRELEQLIQLNAS) forms a coiled coil. The disordered stretch occupies residues 560-579 (PSKSEAGTANLRSFTESPLS). The segment covering 564–577 (EAGTANLRSFTESP) has biased composition (polar residues). The Nuclear localization signal (NLS) signature appears at 601–607 (LKASKRR).

This sequence belongs to the Integrator subunit 13 family. As to quaternary structure, belongs to the multiprotein complex Integrator, at least composed of IntS1, IntS2, IntS3, IntS4, omd/IntS5, IntS6, defl/IntS7, IntS8, IntS9, IntS10, IntS11, IntS12, asun/IntS13, IntS14 and IntS15. The core complex associates with protein phosphatase 2A subunits mts/PP2A and Pp2A-29B, to form the Integrator-PP2A (INTAC) complex. Post-translationally, phosphorylated.

It localises to the nucleus. Its subcellular location is the cytoplasm. The protein localises to the perinuclear region. Component of the integrator complex, a multiprotein complex that terminates RNA polymerase II (Pol II) transcription in the promoter-proximal region of genes. The integrator complex provides a quality checkpoint during transcription elongation by driving premature transcription termination of transcripts that are unfavorably configured for transcriptional elongation: the complex terminates transcription by (1) catalyzing dephosphorylation of the C-terminal domain (CTD) of Pol II subunit Polr2A/Rbp1 and Spt5, and (2) degrading the exiting nascent RNA transcript via endonuclease activity. The integrator complex is also involved in the 3'-end processing of the U7 snRNA, and also the spliceosomal snRNAs U1, U2, U4 and U5. The sequence is that of Protein asunder (asun) from Drosophila pseudoobscura pseudoobscura (Fruit fly).